Here is a 90-residue protein sequence, read N- to C-terminus: Mucin-like protein 1 (90 aa).

The first 20 residues, M1 to Q20, serve as a signal peptide directing secretion. T23, T24, T30, T34, T46, T47, T51, T52, T54, T55, T59, T60, T62, and T63 each carry an O-linked (GalNAc...) threonine glycan. Low complexity-rich tracts occupy residues A25–P36 and A44–T68. The tract at residues A25–T68 is disordered. 3 consecutive repeat copies span residues T46–A53, T54–A61, and T62–A69. Residues T46 to A69 form a 3 X 8 AA tandem repeat of T-T-A-A-[APS]-T-T-A region. Residue S66 is glycosylated (O-linked (GalNAc...) serine). 2 O-linked (GalNAc...) threonine glycosylation sites follow: T67 and T68.

In terms of processing, O-glycosylated. As to expression, expressed in mammary, salivary glands and prostate. Also detected in lung. Mainly expressed in cancer cell lines of breast origin. Highly expressed in lymph node-positive compared with node-negative tumors. Detected in all lymph node containing metastatic cells.

The protein localises to the secreted. The protein resides in the membrane. Its function is as follows. May play a role as marker for the diagnosis of metastatic breast cancer. The protein is Mucin-like protein 1 (MUCL1) of Homo sapiens (Human).